We begin with the raw amino-acid sequence, 951 residues long: Bifunctional glutamine synthetase adenylyltransferase/adenylyl-removing enzyme (951 aa).

The adenylyl removase stretch occupies residues Met-1–Thr-440. The interval His-449–Ser-951 is adenylyl transferase.

It belongs to the GlnE family. Mg(2+) is required as a cofactor.

The enzyme catalyses [glutamine synthetase]-O(4)-(5'-adenylyl)-L-tyrosine + phosphate = [glutamine synthetase]-L-tyrosine + ADP. It carries out the reaction [glutamine synthetase]-L-tyrosine + ATP = [glutamine synthetase]-O(4)-(5'-adenylyl)-L-tyrosine + diphosphate. Functionally, involved in the regulation of glutamine synthetase GlnA, a key enzyme in the process to assimilate ammonia. When cellular nitrogen levels are high, the C-terminal adenylyl transferase (AT) inactivates GlnA by covalent transfer of an adenylyl group from ATP to specific tyrosine residue of GlnA, thus reducing its activity. Conversely, when nitrogen levels are low, the N-terminal adenylyl removase (AR) activates GlnA by removing the adenylyl group by phosphorolysis, increasing its activity. The regulatory region of GlnE binds the signal transduction protein PII (GlnB) which indicates the nitrogen status of the cell. The sequence is that of Bifunctional glutamine synthetase adenylyltransferase/adenylyl-removing enzyme from Yersinia pseudotuberculosis serotype O:1b (strain IP 31758).